A 139-amino-acid polypeptide reads, in one-letter code: Ribosomal RNA large subunit methyltransferase H (139 aa).

S-adenosyl-L-methionine is bound by residues Leu-57, Gly-88, and 107 to 112; that span reads LSAMTF.

This sequence belongs to the RNA methyltransferase RlmH family. As to quaternary structure, homodimer.

The protein localises to the cytoplasm. The catalysed reaction is pseudouridine(1915) in 23S rRNA + S-adenosyl-L-methionine = N(3)-methylpseudouridine(1915) in 23S rRNA + S-adenosyl-L-homocysteine + H(+). Functionally, specifically methylates the pseudouridine at position 1915 (m3Psi1915) in 23S rRNA. The chain is Ribosomal RNA large subunit methyltransferase H from Solibacter usitatus (strain Ellin6076).